A 354-amino-acid chain; its full sequence is Probable disease resistance protein At5g45490 (354 aa).

The stretch at 33 to 53 (AKGNLEKKRDDNEEEERLKTE) forms a coiled coil. Residues 45 to 122 (EEEERLKTES…VYAPRVWVSM (78 aa)) form the NB-ARC domain. Residue 91–98 (GEYGVGKT) coordinates ATP. The segment at 328–354 (DDEVGPVGSTHGQTDSSNRQPANQASS) is disordered. Residues 337–354 (THGQTDSSNRQPANQASS) are compositionally biased toward polar residues.

Possible disease resistance protein. The sequence is that of Probable disease resistance protein At5g45490 from Arabidopsis thaliana (Mouse-ear cress).